Here is a 372-residue protein sequence, read N- to C-terminus: MRILADQAIPYVYKLFGSDNYVQVCDGRSISANMLKDVDVLIIRSITKVNHMLLYDSSIKFIGTVTSGVDHIDQNYLKNNNIRCVSTPGSNAVSVVEYVCATLFWLAQRDCFFLRDKTVGIIGVGNIGNLLYQRLNSLGVHTLLYDPYKSKCDTDRMSWKSLDILVSKSDILTLHVPLTYTGAYPTWHMINKDILDALPSNSILINTSRGAVVNNDDLLAILRCGKKINVILDVWESEPKLSLPLLSYVDIGTAHIAGYSFESRIRSIKKIYDDYCDYFNVKNKVNWISLGLSDIRYIAVSRLDECIINRLIQLVYNVYYDHIALKNNVLRLRGFDKLREYYCFRREWSSLLVDSKNGYNNDILFKFGFSTL.

Residues Ser-45 and Thr-66 each contribute to the substrate site. An NAD(+)-binding site is contributed by Asp-146. Arg-209 is an active-site residue. Asp-233 provides a ligand contact to NAD(+). Glu-238 is a catalytic residue. The active-site Proton donor is the His-255. Gly-258 lines the NAD(+) pocket. Tyr-259 serves as a coordination point for substrate.

Belongs to the D-isomer specific 2-hydroxyacid dehydrogenase family. PdxB subfamily. Homodimer.

The protein localises to the cytoplasm. The catalysed reaction is 4-phospho-D-erythronate + NAD(+) = (R)-3-hydroxy-2-oxo-4-phosphooxybutanoate + NADH + H(+). It participates in cofactor biosynthesis; pyridoxine 5'-phosphate biosynthesis; pyridoxine 5'-phosphate from D-erythrose 4-phosphate: step 2/5. Functionally, catalyzes the oxidation of erythronate-4-phosphate to 3-hydroxy-2-oxo-4-phosphonooxybutanoate. The sequence is that of Erythronate-4-phosphate dehydrogenase from Blochmanniella floridana.